We begin with the raw amino-acid sequence, 456 residues long: MVPSNGAKVLRLLSRRCLSSSLIQDLANQKLRGVCIGSYRRLNTSVGNHANVIGDYASKSGHDRKWINFGGFNTNFGSTRSFHGTGSSFMSAKDYYSVLGVSKNAQEGEIKKAYYGLAKKLHPDMNKDDPEAETKFQEVSKAYEILKDKEKRDLYDQVGHEAFEQNASGGFPNDQGFGGGGGGGFNPFDIFGSFNGDIFNMYRQDIGGQDVKVLLDLSFMEAVQGCSKTVTFQTEMACNTCGGQGVPPGTKREKCKACNGSGMTSLRRGMLSIQTTCQKCGGAGQTFSSICKSCRGARVVRGQKSVKVTIDPGVDNSDTLKVARVGGADPEGDQPGDLYVTLKVREDPVFRREGSDIHVDAVLSVTQAILGGTIQVPTLTGDVVVKVRPGTQPGHKVVLRNKGIRARKSTKFGDQYVHFNVSIPANITQRQRELLEEFSKAEQGEYEQRTATGSSQ.

The N-terminal 89 residues, 1–89, are a transit peptide targeting the mitochondrion; sequence MVPSNGAKVL…RSFHGTGSSF (89 aa). The J domain maps to 94-159; that stretch reads DYYSVLGVSK…EKRDLYDQVG (66 aa). The CR-type zinc-finger motif lies at 225-303; that stretch reads GCSKTVTFQT…CRGARVVRGQ (79 aa). Residues Cys-238, Cys-241, Cys-255, Cys-258, Cys-277, Cys-280, Cys-291, and Cys-294 each contribute to the Zn(2+) site. CXXCXGXG motif repeat units lie at residues 238–245, 255–262, 277–284, and 291–298; these read CNTCGGQG, CKACNGSG, CQKCGGAG, and CKSCRGAR.

This sequence belongs to the DnaJ family. Widely expressed.

It localises to the mitochondrion. Its function is as follows. Chaperone that may play a role in mitochondrial protein folding. Involved in female gametophyte development. Required for cell death of the synergid cells during fertilization process, and fusion of the polar nuclei during megagametogenesis. The chain is Chaperone protein dnaJ GFA2, mitochondrial from Arabidopsis thaliana (Mouse-ear cress).